Consider the following 292-residue polypeptide: 4-hydroxy-tetrahydrodipicolinate synthase (292 aa).

Residue threonine 45 participates in pyruvate binding. Tyrosine 133 serves as the catalytic Proton donor/acceptor. Lysine 161 acts as the Schiff-base intermediate with substrate in catalysis. Isoleucine 203 provides a ligand contact to pyruvate.

This sequence belongs to the DapA family. Homodimer.

The protein resides in the cytoplasm. The catalysed reaction is L-aspartate 4-semialdehyde + pyruvate = (2S,4S)-4-hydroxy-2,3,4,5-tetrahydrodipicolinate + H2O + H(+). It participates in amino-acid biosynthesis; L-lysine biosynthesis via DAP pathway; (S)-tetrahydrodipicolinate from L-aspartate: step 3/4. Its function is as follows. Catalyzes the condensation of (S)-aspartate-beta-semialdehyde [(S)-ASA] and pyruvate to 4-hydroxy-tetrahydrodipicolinate (HTPA). The chain is 4-hydroxy-tetrahydrodipicolinate synthase from Pseudomonas aeruginosa (strain ATCC 15692 / DSM 22644 / CIP 104116 / JCM 14847 / LMG 12228 / 1C / PRS 101 / PAO1).